We begin with the raw amino-acid sequence, 214 residues long: Large ribosomal subunit protein uL3 (214 aa).

The segment at 131–153 is disordered; it reads KSQRASHGNSRSHNVPGSIGMAQ. Positions 132 to 145 are enriched in polar residues; sequence SQRASHGNSRSHNV. Q153 is subject to N5-methylglutamine.

Belongs to the universal ribosomal protein uL3 family. Part of the 50S ribosomal subunit. Forms a cluster with proteins L14 and L19. Methylated by PrmB.

In terms of biological role, one of the primary rRNA binding proteins, it binds directly near the 3'-end of the 23S rRNA, where it nucleates assembly of the 50S subunit. The polypeptide is Large ribosomal subunit protein uL3 (Thiobacillus denitrificans (strain ATCC 25259 / T1)).